The primary structure comprises 540 residues: Phenylalanine--tRNA ligase beta subunit (540 aa).

Positions Met270–Ser347 constitute a B5 domain. Positions 325, 331, 334, and 335 each coordinate Mg(2+).

Belongs to the phenylalanyl-tRNA synthetase beta subunit family. Type 2 subfamily. Tetramer of two alpha and two beta subunits. Mg(2+) is required as a cofactor.

It localises to the cytoplasm. The catalysed reaction is tRNA(Phe) + L-phenylalanine + ATP = L-phenylalanyl-tRNA(Phe) + AMP + diphosphate + H(+). This is Phenylalanine--tRNA ligase beta subunit from Methanococcoides burtonii (strain DSM 6242 / NBRC 107633 / OCM 468 / ACE-M).